The primary structure comprises 581 residues: DNA primase (581 aa).

The CHC2-type zinc finger occupies 40-64 (CPFHNEKTPSFTVNGEKQFYHCFGC). The 83-residue stretch at 259–341 (QRLLVVEGYM…GRQVRFMFLP (83 aa)) folds into the Toprim domain. Residues glutamate 265, aspartate 309, and aspartate 311 each coordinate Mg(2+).

It belongs to the DnaG primase family. In terms of assembly, monomer. Interacts with DnaB. It depends on Zn(2+) as a cofactor. Mg(2+) is required as a cofactor.

The catalysed reaction is ssDNA + n NTP = ssDNA/pppN(pN)n-1 hybrid + (n-1) diphosphate.. Its function is as follows. RNA polymerase that catalyzes the synthesis of short RNA molecules used as primers for DNA polymerase during DNA replication. This chain is DNA primase, found in Salmonella typhimurium (strain LT2 / SGSC1412 / ATCC 700720).